The primary structure comprises 121 residues: MLTKKEQRLRRARQTRIRIAQQGVARLTVNRTNLHIYASVISGDGSKVLASASTAEADVRKSLGGSGKGGNAAAAQIIGKRIAEKAKAAGVEKVAFDRAGFAYHGRVKALADAAREAGLQF.

It belongs to the universal ribosomal protein uL18 family. As to quaternary structure, part of the 50S ribosomal subunit; part of the 5S rRNA/L5/L18/L25 subcomplex. Contacts the 5S and 23S rRNAs.

Functionally, this is one of the proteins that bind and probably mediate the attachment of the 5S RNA into the large ribosomal subunit, where it forms part of the central protuberance. The sequence is that of Large ribosomal subunit protein uL18 from Acidovorax ebreus (strain TPSY) (Diaphorobacter sp. (strain TPSY)).